Here is a 253-residue protein sequence, read N- to C-terminus: Claudin domain-containing protein 1 (253 aa).

The helical transmembrane segment at Phe5–Ala25 threads the bilayer. N-linked (GlcNAc...) asparagine glycosylation is found at Asn42 and Asn72. Transmembrane regions (helical) follow at residues Phe141 to Ala161, Ile175 to Ile195, and Phe216 to Ala236.

Belongs to the PMP-22/EMP/MP20 family. In terms of tissue distribution, widely distributed in the adult CNS with highest expression in the corpus callosum, caudate nucleus, cerebral cortex, medulla, putamen, spinal cord, substantia nigra and subthalamic nucleus. Weak expression was detected in the adult heart.

The protein localises to the cell junction. Its subcellular location is the tight junction. The protein resides in the cell membrane. In terms of biological role, plays a role in negatively regulating the permeability of cells to small molecules. This is Claudin domain-containing protein 1 (CLDND1) from Homo sapiens (Human).